A 436-amino-acid polypeptide reads, in one-letter code: Trigger factor (436 aa).

The 86-residue stretch at 163–248 (GDRVVLDFAG…VKEVAEGVLP (86 aa)) folds into the PPIase FKBP-type domain.

Belongs to the FKBP-type PPIase family. Tig subfamily.

The protein resides in the cytoplasm. The catalysed reaction is [protein]-peptidylproline (omega=180) = [protein]-peptidylproline (omega=0). In terms of biological role, involved in protein export. Acts as a chaperone by maintaining the newly synthesized protein in an open conformation. Functions as a peptidyl-prolyl cis-trans isomerase. In Bordetella parapertussis (strain 12822 / ATCC BAA-587 / NCTC 13253), this protein is Trigger factor.